Consider the following 294-residue polypeptide: GTP cyclohydrolase FolE2 (294 aa).

The protein belongs to the GTP cyclohydrolase IV family.

It carries out the reaction GTP + H2O = 7,8-dihydroneopterin 3'-triphosphate + formate + H(+). It functions in the pathway cofactor biosynthesis; 7,8-dihydroneopterin triphosphate biosynthesis; 7,8-dihydroneopterin triphosphate from GTP: step 1/1. Converts GTP to 7,8-dihydroneopterin triphosphate. In Acinetobacter baylyi (strain ATCC 33305 / BD413 / ADP1), this protein is GTP cyclohydrolase FolE2.